The primary structure comprises 224 residues: Adenylate kinase (224 aa).

Residue 10–15 (GSGKST) participates in ATP binding. The tract at residues 30–59 (SSGDMIRAEIEKGSELGKELKKYLAKGELI) is NMP. AMP-binding positions include Ser31, Arg36, 57–59 (ELI), 83–86 (GYPR), and Gln90. Positions 124 to 161 (GRRICPKCGAVYHLRYRPPKVPGKCDLCGSQLIQREDD) are LID. Arg125 provides a ligand contact to ATP. Zn(2+)-binding residues include Cys128 and Cys131. Residue 134–135 (VY) coordinates ATP. 2 residues coordinate Zn(2+): Cys148 and Cys151. AMP-binding residues include Arg158 and Arg169. Gly197 provides a ligand contact to ATP.

The protein belongs to the adenylate kinase family. As to quaternary structure, monomer.

The protein resides in the cytoplasm. It catalyses the reaction AMP + ATP = 2 ADP. It functions in the pathway purine metabolism; AMP biosynthesis via salvage pathway; AMP from ADP: step 1/1. In terms of biological role, catalyzes the reversible transfer of the terminal phosphate group between ATP and AMP. Plays an important role in cellular energy homeostasis and in adenine nucleotide metabolism. This chain is Adenylate kinase, found in Thermococcus onnurineus (strain NA1).